The chain runs to 143 residues: Nucleoside diphosphate kinase (143 aa).

The ATP site is built by Lys-11, Phe-59, Arg-87, Thr-93, Arg-104, and Asn-114. The Pros-phosphohistidine intermediate role is filled by His-117.

This sequence belongs to the NDK family. As to quaternary structure, homotetramer. Mg(2+) serves as cofactor.

Its subcellular location is the cytoplasm. It carries out the reaction a 2'-deoxyribonucleoside 5'-diphosphate + ATP = a 2'-deoxyribonucleoside 5'-triphosphate + ADP. The enzyme catalyses a ribonucleoside 5'-diphosphate + ATP = a ribonucleoside 5'-triphosphate + ADP. In terms of biological role, major role in the synthesis of nucleoside triphosphates other than ATP. The ATP gamma phosphate is transferred to the NDP beta phosphate via a ping-pong mechanism, using a phosphorylated active-site intermediate. The polypeptide is Nucleoside diphosphate kinase (Shewanella denitrificans (strain OS217 / ATCC BAA-1090 / DSM 15013)).